The chain runs to 142 residues: uncharacterized protein (142 aa).

The tract at residues 1-22 (MSGSVNQNTDQHSQDSSSTPNN) is disordered. A run of 2 helical transmembrane segments spans residues 63 to 83 (LFVMYMIVQVSYYIVPFVLLV) and 109 to 129 (IIDGIIGVLQFIFWFWIFVDL).

The protein resides in the membrane. This is an uncharacterized protein from Acanthamoeba polyphaga mimivirus (APMV).